The chain runs to 386 residues: Uroporphyrinogen decarboxylase (386 aa).

Coproporphyrinogen I-binding residues include R44, A46, R48, R57, D93, Y170, S225, and H364. 3 residues coordinate coproporphyrinogen III: R44, A46, and R48. Residues D93, Y170, S225, and H364 each contribute to the coproporphyrinogen III site.

The protein belongs to the uroporphyrinogen decarboxylase family. Homodimer.

Its subcellular location is the cytoplasm. The protein localises to the cytosol. The catalysed reaction is uroporphyrinogen III + 4 H(+) = coproporphyrinogen III + 4 CO2. Its pathway is porphyrin-containing compound metabolism; protoporphyrin-IX biosynthesis; coproporphyrinogen-III from 5-aminolevulinate: step 4/4. Functionally, catalyzes the decarboxylation of four acetate groups of uroporphyrinogen-III to yield coproporphyrinogen-III. The protein is Uroporphyrinogen decarboxylase of Drosophila virilis (Fruit fly).